A 356-amino-acid polypeptide reads, in one-letter code: Mitogen-activated protein kinase PMK1 (356 aa).

Positions 24–312 (YDIQDVVGEG…VEEALKHPYL (289 aa)) constitute a Protein kinase domain. ATP-binding positions include 30-38 (VGEGAYGVV) and K53.

It belongs to the protein kinase superfamily. CMGC Ser/Thr protein kinase family. MAP kinase subfamily. It depends on Mg(2+) as a cofactor. Phosphorylated by MST7.

It catalyses the reaction L-seryl-[protein] + ATP = O-phospho-L-seryl-[protein] + ADP + H(+). It carries out the reaction L-threonyl-[protein] + ATP = O-phospho-L-threonyl-[protein] + ADP + H(+). In terms of biological role, mitogen-activated protein kinase; part of the MST11-MST7-PMK1 MAP kinase (MAPK) cascade that is essential for appressorium formation, penetration and invasive growth. Central regulator of appressorium development that acts downstream of the cAMP signal. The MST11-MST7-PMK1 MAP kinase cascade transduces signals from the cell surface sensors MDB2 and SHO1 that recognize various surface signals such as surface hydrophobicity, cutin monomers, and rice leaf waxes. Regulates expression of secreted fungal effector proteins implicated of host immune defenses, preventing reactive oxygen species generation and excessive callose deposition at plasmodesmata. Furthermore, controls the hyphal constriction required for fungal growth from one rice cell to the neighboring cell, enabling host tissue colonization and blast disease. Targets downstream of the PMK1-MAPK pathway include transcription factor MST12 and pathogenicity-related genes GAS1 and GAS2, both of which are expressed during appressorium formation, even if regulation of MST12 is not associated with expression of GAS1 or GAS2. The sequence is that of Mitogen-activated protein kinase PMK1 from Pyricularia oryzae (Rice blast fungus).